A 572-amino-acid chain; its full sequence is Phosphoenolpyruvate-protein phosphotransferase (572 aa).

Histidine 190 acts as the Tele-phosphohistidine intermediate in catalysis. Positions 297 and 333 each coordinate phosphoenolpyruvate. Mg(2+) contacts are provided by glutamate 427 and aspartate 451. Residues 450–451 (ND) and arginine 461 each bind phosphoenolpyruvate. Residue cysteine 498 is the Proton donor of the active site.

Belongs to the PEP-utilizing enzyme family. As to quaternary structure, homodimer. The cofactor is Mg(2+).

It is found in the cytoplasm. The enzyme catalyses L-histidyl-[protein] + phosphoenolpyruvate = N(pros)-phospho-L-histidyl-[protein] + pyruvate. General (non sugar-specific) component of the phosphoenolpyruvate-dependent sugar phosphotransferase system (sugar PTS). This major carbohydrate active-transport system catalyzes the phosphorylation of incoming sugar substrates concomitantly with their translocation across the cell membrane. Enzyme I transfers the phosphoryl group from phosphoenolpyruvate (PEP) to the phosphoryl carrier protein (HPr). In Mycoplasma pneumoniae (strain ATCC 29342 / M129 / Subtype 1) (Mycoplasmoides pneumoniae), this protein is Phosphoenolpyruvate-protein phosphotransferase (ptsI).